Here is a 149-residue protein sequence, read N- to C-terminus: SPbeta prophage-derived putative transcriptional regulator YosT (149 aa).

This is SPbeta prophage-derived putative transcriptional regulator YosT (yosT) from Bacillus subtilis (strain 168).